The chain runs to 159 residues: 3-hydroxyacyl-[acyl-carrier-protein] dehydratase FabZ (159 aa).

His59 is a catalytic residue.

Belongs to the thioester dehydratase family. FabZ subfamily.

The protein localises to the cytoplasm. It catalyses the reaction a (3R)-hydroxyacyl-[ACP] = a (2E)-enoyl-[ACP] + H2O. In terms of biological role, involved in unsaturated fatty acids biosynthesis. Catalyzes the dehydration of short chain beta-hydroxyacyl-ACPs and long chain saturated and unsaturated beta-hydroxyacyl-ACPs. The protein is 3-hydroxyacyl-[acyl-carrier-protein] dehydratase FabZ of Caulobacter vibrioides (strain ATCC 19089 / CIP 103742 / CB 15) (Caulobacter crescentus).